A 220-amino-acid polypeptide reads, in one-letter code: uncharacterized protein (220 aa).

This sequence belongs to the DadA oxidoreductase family. FAD serves as cofactor.

This is an uncharacterized protein from Halorhodospira halophila (Ectothiorhodospira halophila).